The primary structure comprises 280 residues: Phosphonoacetaldehyde hydrolase (280 aa).

Residue D23 is the Nucleophile of the active site. Mg(2+)-binding residues include D23 and A25. K64 (schiff-base intermediate with substrate) is an active-site residue. D197 lines the Mg(2+) pocket.

The protein belongs to the HAD-like hydrolase superfamily. PhnX family. Homodimer. Mg(2+) serves as cofactor.

The enzyme catalyses phosphonoacetaldehyde + H2O = acetaldehyde + phosphate + H(+). Involved in phosphonate degradation. This Bordetella avium (strain 197N) protein is Phosphonoacetaldehyde hydrolase.